Here is a 473-residue protein sequence, read N- to C-terminus: MNFETTIGLEVHIELKTHSKIFSPSPVAYGADPNANTNVIDWGYPGVLPTTNKGVVADGIIAALALHATVEQHTHFDRKNYFYPDNPKAYQITQSDKPIGHDGWVEIDVDGVKKKIGIAEMHIEEDAGKNTHERDYSYVDLNRQGTPLIEIVSKPDIASPAEAYAYLEALRQRIQFTGISDVKMEEGSMRVDVNISVRPVGQQKFGTKTELKNLNSFNYVQRGLEYEEKRQQQVLMSGGAVQQETRRFDEKTGETILMRVKAGADDYRYFPEPDLPALNISDDWIKELDAAMPEMPGKRRERYVNELGLTDYDAMVITQTKEMSDFFNATVALKADPKMAANYLQGDVNAYLNDKQVDLQATKLTPEHLAGMINLITDGTISSKMAKKVFKAITEGEDPKAFVEANGLVQLSDPAKLQPIIDDVLSANPQSIEDFNNGKKRAVGFLVGQIMKQTHGQANPQVVNKLLMAALQQ.

This sequence belongs to the GatB/GatE family. GatB subfamily. As to quaternary structure, heterotrimer of A, B and C subunits.

The catalysed reaction is L-glutamyl-tRNA(Gln) + L-glutamine + ATP + H2O = L-glutaminyl-tRNA(Gln) + L-glutamate + ADP + phosphate + H(+). It catalyses the reaction L-aspartyl-tRNA(Asn) + L-glutamine + ATP + H2O = L-asparaginyl-tRNA(Asn) + L-glutamate + ADP + phosphate + 2 H(+). Functionally, allows the formation of correctly charged Asn-tRNA(Asn) or Gln-tRNA(Gln) through the transamidation of misacylated Asp-tRNA(Asn) or Glu-tRNA(Gln) in organisms which lack either or both of asparaginyl-tRNA or glutaminyl-tRNA synthetases. The reaction takes place in the presence of glutamine and ATP through an activated phospho-Asp-tRNA(Asn) or phospho-Glu-tRNA(Gln). The polypeptide is Aspartyl/glutamyl-tRNA(Asn/Gln) amidotransferase subunit B (Levilactobacillus brevis (strain ATCC 367 / BCRC 12310 / CIP 105137 / JCM 1170 / LMG 11437 / NCIMB 947 / NCTC 947) (Lactobacillus brevis)).